Here is a 1073-residue protein sequence, read N- to C-terminus: Probable inorganic carbon transporter subunit DabA (1073 aa).

Residues Cys551, Asp553, His742, and Cys757 each contribute to the Zn(2+) site.

It belongs to the inorganic carbon transporter (TC 9.A.2) DabA family. Forms a complex with DabB. It depends on Zn(2+) as a cofactor.

It is found in the cell inner membrane. Part of an energy-coupled inorganic carbon pump. This Methylococcus capsulatus (strain ATCC 33009 / NCIMB 11132 / Bath) protein is Probable inorganic carbon transporter subunit DabA.